A 77-amino-acid chain; its full sequence is U8-lycotoxin-Ls1m (77 aa).

Residues 1–20 (MKLMIFTGLFLFAIVSLIEA) form the signal peptide. A propeptide spanning residues 21–26 (QAENEK) is cleaved from the precursor.

This sequence belongs to the neurotoxin 19 (CSTX) family. 08 (U8-Lctx) subfamily. Contains 4 disulfide bonds. In terms of tissue distribution, expressed by the venom gland.

Its subcellular location is the secreted. The protein is U8-lycotoxin-Ls1m of Lycosa singoriensis (Wolf spider).